The following is a 173-amino-acid chain: Ribosome maturation factor RimM (173 aa).

The PRC barrel domain maps to 95–173 (EGEYYWRQLE…LMVVDWDPDF (79 aa)).

It belongs to the RimM family. Binds ribosomal protein uS19.

It is found in the cytoplasm. Its function is as follows. An accessory protein needed during the final step in the assembly of 30S ribosomal subunit, possibly for assembly of the head region. Essential for efficient processing of 16S rRNA. May be needed both before and after RbfA during the maturation of 16S rRNA. It has affinity for free ribosomal 30S subunits but not for 70S ribosomes. This is Ribosome maturation factor RimM from Hahella chejuensis (strain KCTC 2396).